The primary structure comprises 118 residues: Large ribosomal subunit protein bL19 (118 aa).

Belongs to the bacterial ribosomal protein bL19 family.

In terms of biological role, this protein is located at the 30S-50S ribosomal subunit interface and may play a role in the structure and function of the aminoacyl-tRNA binding site. This Buchnera aphidicola subsp. Baizongia pistaciae (strain Bp) protein is Large ribosomal subunit protein bL19.